Reading from the N-terminus, the 181-residue chain is Large ribosomal subunit protein uL5 (181 aa).

This sequence belongs to the universal ribosomal protein uL5 family. As to quaternary structure, part of the 50S ribosomal subunit; part of the 5S rRNA/L5/L18/L25 subcomplex. Contacts the 5S rRNA and the P site tRNA. Forms a bridge to the 30S subunit in the 70S ribosome.

In terms of biological role, this is one of the proteins that bind and probably mediate the attachment of the 5S RNA into the large ribosomal subunit, where it forms part of the central protuberance. In the 70S ribosome it contacts protein S13 of the 30S subunit (bridge B1b), connecting the 2 subunits; this bridge is implicated in subunit movement. Contacts the P site tRNA; the 5S rRNA and some of its associated proteins might help stabilize positioning of ribosome-bound tRNAs. The chain is Large ribosomal subunit protein uL5 from Mesomycoplasma hyopneumoniae (strain 7448) (Mycoplasma hyopneumoniae).